Reading from the N-terminus, the 359-residue chain is N-acetylneuraminate-9-phosphate synthase (359 aa).

N6-acetyllysine is present on residues lysine 61, lysine 74, and lysine 79. Phosphoserine is present on serine 275. Position 290 is an N6-acetyllysine (lysine 290). One can recognise an AFP-like domain in the interval 294-353 (SVVAKVKIPAGTTLTLDMLTVKVGEPKGYPPEDIFNLAGKKVLVTIEEDDTVMEESVESH).

Ubiquitous.

The protein localises to the cytoplasm. It catalyses the reaction aldehydo-N-acetyl-D-mannosamine 6-phosphate + phosphoenolpyruvate + H2O = N-acetylneuraminate 9-phosphate + phosphate. Functionally, catalyzes condensation of phosphoenolpyruvate (PEP) and N-acetylmannosamine 6-phosphate (ManNAc-6-P) to synthesize N-acetylneuraminate-9-phosphate (Neu5Ac-9-P). Neu5Ac-9-P is the phosphorylated forms of sialic acid N-acetylneuraminic acid (Neu5Ac). In contrast with human ortholog, has no detectable activity towards D-mannose 6-phosphate. The chain is N-acetylneuraminate-9-phosphate synthase from Mus musculus (Mouse).